The following is a 402-amino-acid chain: BTB and MATH domain-containing protein 40 (402 aa).

Positions 1–25 (MSDRHLYGSDHSYLSSKPSCSSCRR) are disordered. Positions 15-25 (SSKPSCSSCRR) are enriched in low complexity. In terms of domain architecture, MATH spans 43–177 (VLTQRWTVCN…DKSLVISCHI (135 aa)). Residues 222-295 (TDMTIVAGPL…IYAGVIKSDI (74 aa)) form the BTB domain.

As to quaternary structure, interacts with cul-3.

It functions in the pathway protein modification; protein ubiquitination. Functionally, probable substrate-specific adapter of an E3 ubiquitin-protein ligase complex which mediates the ubiquitination and subsequent proteasomal degradation of target proteins. This is BTB and MATH domain-containing protein 40 (bath-40) from Caenorhabditis elegans.